We begin with the raw amino-acid sequence, 592 residues long: Putative esterase (592 aa).

The chain crosses the membrane as a helical span at residues 12-32 (LTLIAYLSVLMGVSVYFYVLI). N-linked (GlcNAc...) asparagine; by host glycans are attached at residues asparagine 68, asparagine 83, asparagine 95, asparagine 447, and asparagine 510. Histidine 513 acts as the Charge relay system in catalysis. Residue asparagine 528 is glycosylated (N-linked (GlcNAc...) asparagine; by host).

This sequence belongs to the type-B carboxylesterase/lipase family.

The protein localises to the membrane. The enzyme catalyses a carboxylic ester + H2O = an alcohol + a carboxylate + H(+). This Spodoptera frugiperda (Fall armyworm) protein is Putative esterase.